The chain runs to 174 residues: UPF0316 protein Dhaf_3052 (174 aa).

Transmembrane regions (helical) follow at residues 4-24 (ILQFVLIIITINITYVTLTTI), 35-55 (VYASLLSVLEVFIYIMGLSII), and 59-79 (LDSYWNIAAYCCGYGVGVYLG).

Belongs to the UPF0316 family.

Its subcellular location is the cell membrane. This chain is UPF0316 protein Dhaf_3052, found in Desulfitobacterium hafniense (strain DSM 10664 / DCB-2).